A 104-amino-acid chain; its full sequence is Succinate dehydrogenase assembly factor 4, mitochondrial (104 aa).

Residues 1–30 (MVSTTLSVSRMTFVWRAARPSLLNHSLRKM) constitute a mitochondrion transit peptide. Residues 29 to 104 (KMSYQEGKPE…WERKGRCIDF (76 aa)) form a disordered region. Composition is skewed to basic and acidic residues over residues 63-83 (EREP…EKGG) and 91-104 (RYGD…CIDF).

The protein belongs to the SDHAF4 family. Interacts with Sdha in its FAD-bound form.

Its subcellular location is the mitochondrion matrix. Functionally, plays an essential role in the assembly of succinate dehydrogenase (SDH), an enzyme complex (also referred to as respiratory complex II) that is a component of both the tricarboxylic acid (TCA) cycle and the mitochondrial electron transport chain, and which couples the oxidation of succinate to fumarate with the reduction of ubiquinone (coenzyme Q) to ubiquinol. Binds to the flavoprotein subunit Sdha in its FAD-bound form, blocking the generation of excess reactive oxygen species (ROS) and facilitating its assembly with the iron-sulfur protein subunit Sdhb into the SDH catalytic dimer. The polypeptide is Succinate dehydrogenase assembly factor 4, mitochondrial (Mus musculus (Mouse)).